Consider the following 87-residue polypeptide: DNA-directed RNA polymerase subunit Rpo5 (87 aa).

This sequence belongs to the archaeal Rpo5/eukaryotic RPB5 RNA polymerase subunit family. Part of the RNA polymerase complex.

Its subcellular location is the cytoplasm. The catalysed reaction is RNA(n) + a ribonucleoside 5'-triphosphate = RNA(n+1) + diphosphate. Functionally, DNA-dependent RNA polymerase (RNAP) catalyzes the transcription of DNA into RNA using the four ribonucleoside triphosphates as substrates. This is DNA-directed RNA polymerase subunit Rpo5 from Thermoplasma acidophilum (strain ATCC 25905 / DSM 1728 / JCM 9062 / NBRC 15155 / AMRC-C165).